The chain runs to 480 residues: Aspartyl/glutamyl-tRNA(Asn/Gln) amidotransferase subunit B (480 aa).

Belongs to the GatB/GatE family. GatB subfamily. As to quaternary structure, heterotrimer of A, B and C subunits.

The enzyme catalyses L-glutamyl-tRNA(Gln) + L-glutamine + ATP + H2O = L-glutaminyl-tRNA(Gln) + L-glutamate + ADP + phosphate + H(+). The catalysed reaction is L-aspartyl-tRNA(Asn) + L-glutamine + ATP + H2O = L-asparaginyl-tRNA(Asn) + L-glutamate + ADP + phosphate + 2 H(+). Its function is as follows. Allows the formation of correctly charged Asn-tRNA(Asn) or Gln-tRNA(Gln) through the transamidation of misacylated Asp-tRNA(Asn) or Glu-tRNA(Gln) in organisms which lack either or both of asparaginyl-tRNA or glutaminyl-tRNA synthetases. The reaction takes place in the presence of glutamine and ATP through an activated phospho-Asp-tRNA(Asn) or phospho-Glu-tRNA(Gln). The chain is Aspartyl/glutamyl-tRNA(Asn/Gln) amidotransferase subunit B from Streptococcus pneumoniae serotype 2 (strain D39 / NCTC 7466).